The primary structure comprises 438 residues: Enolase (438 aa).

Residues histidine 159 and glutamate 168 each coordinate substrate. Residue glutamate 211 is the Proton donor of the active site. The Mg(2+) site is built by aspartate 246, glutamate 297, and aspartate 322. The substrate site is built by glutamate 297 and aspartate 322. Catalysis depends on lysine 347, which acts as the Proton acceptor. Substrate is bound by residues 374–377 (SHRS) and lysine 398.

Belongs to the enolase family. In terms of assembly, homodimer. Mg(2+) serves as cofactor.

The protein resides in the cytoplasm. It carries out the reaction (2R)-2-phosphoglycerate = phosphoenolpyruvate + H2O. The protein operates within carbohydrate degradation; glycolysis; pyruvate from D-glyceraldehyde 3-phosphate: step 4/5. This chain is Enolase (enoA), found in Penicillium citrinum.